The sequence spans 659 residues: Cysteine-rich receptor-like protein kinase 7 (659 aa).

An N-terminal signal peptide occupies residues 1–23 (MSSLFPFIFLFLFSFLTSFRASA). At 24-273 (QDPRFLAYYC…SLSDKSGNSN (250 aa)) the chain is on the extracellular side. Gnk2-homologous domains follow at residues 27–131 (RFLA…HKNI) and 142–244 (FILR…LYDF). Residues N35, N42, N60, N69, and N103 are each glycosylated (N-linked (GlcNAc...) asparagine). N-linked (GlcNAc...) asparagine glycosylation is present at N246. A helical transmembrane segment spans residues 274-294 (VVVVAVVVPIIVAVLIFIAGY). Over 295–659 (CFFAKRAKKT…DKSMSDLDPR (365 aa)) the chain is Cytoplasmic. The region spanning 336–622 (FSENNKIGRG…ALPAPQQPGF (287 aa)) is the Protein kinase domain. ATP contacts are provided by residues 342–350 (IGRGGFGDV) and K364. Y409 is modified (phosphotyrosine). D461 acts as the Proton acceptor in catalysis. The residue at position 465 (S465) is a Phosphoserine. T501 bears the Phosphothreonine mark. Position 509 is a phosphotyrosine (Y509). A disordered region spans residues 626 to 659 (SRPGTNRLDSDQSTTNKSVTVSIDDKSMSDLDPR). Residues 636–646 (DQSTTNKSVTV) show a composition bias toward polar residues. Basic and acidic residues predominate over residues 648–659 (IDDKSMSDLDPR).

The protein belongs to the protein kinase superfamily. Ser/Thr protein kinase family. CRK subfamily.

The protein resides in the membrane. It catalyses the reaction L-seryl-[protein] + ATP = O-phospho-L-seryl-[protein] + ADP + H(+). The enzyme catalyses L-threonyl-[protein] + ATP = O-phospho-L-threonyl-[protein] + ADP + H(+). This is Cysteine-rich receptor-like protein kinase 7 (CRK7) from Arabidopsis thaliana (Mouse-ear cress).